Reading from the N-terminus, the 41-residue chain is MKVRNSLRSLKSRHRDCRVVRRKGRVYVINKTQRKFKARQG.

The protein belongs to the bacterial ribosomal protein bL36 family.

This is Large ribosomal subunit protein bL36 from Ruegeria pomeroyi (strain ATCC 700808 / DSM 15171 / DSS-3) (Silicibacter pomeroyi).